The chain runs to 509 residues: MFS antiporter QDR1 (509 aa).

Topologically, residues 1–41 (MPGNREEFDIEKVLKSKKLEAIETSTEKKAPYTVFESTDKL) are cytoplasmic. Residues 42-62 (LLIIVLSLVGFWSAISSPIYF) traverse the membrane as a helical segment. The Extracellular segment spans residues 63 to 75 (PALPTLTKYFNTT). The helical transmembrane segment at 76–96 (PSVMNISVVAYLIFQGIAPTI) threads the bilayer. Over 97 to 106 (SSNLADTFGR) the chain is Cytoplasmic. The helical transmembrane segment at 107–129 (RPVILGSIIVFCAVCIAISQTNV) threads the bilayer. The Extracellular portion of the chain corresponds to 130–132 (YWL). A helical transmembrane segment spans residues 133 to 155 (LALLRCFQAAGIAPVFAISSGVA). Over 156–169 (GDICTPANRGGMVG) the chain is Cytoplasmic. Residues 170 to 190 (AVSGLQLAGNGIGGLVGAALI) form a helical membrane-spanning segment. Residues 191 to 197 (SGFHTWR) are Extracellular-facing. The chain crosses the membrane as a helical span at residues 198–218 (AIFIFLAIGGGVTFIFAFLVL). The Cytoplasmic segment spans residues 219-278 (AETSRRIVGNGSIRPKNVLNKAVLIYLPHFKNKITNDYSTLQPKGPFDILGPFKIFFQKE). Residues 279 to 299 (VFCTLLPSGMHFAAWTVSLTS) traverse the membrane as a helical segment. Residues 300 to 312 (LSTELESAKYNYS) lie on the Extracellular side of the membrane. Residues 313 to 333 (VMKVGLVYLPQGIACFIGSLI) form a helical membrane-spanning segment. The Cytoplasmic portion of the chain corresponds to 334–370 (AGRCLNWYYRYRKNLYDKQMNDVPLNDRPPFNLVASR). A helical transmembrane segment spans residues 371–391 (LTLTIVPLAMMVIGLSAFGWC). At 392 to 397 (LEYKKP) the chain is on the extracellular side. Residues 398-418 (IISIIISTILISFSASVMMSI) traverse the membrane as a helical segment. At 419–432 (CTTMLVDLYPKQSG) the chain is on the cytoplasmic side. A helical transmembrane segment spans residues 433-453 (ASASCVNLMRCWLAALFTGVL). Over 454-455 (DK) the chain is Extracellular. A helical transmembrane segment spans residues 456-476 (IISALGLGGTYTLLTGICLLT). At 477–509 (DLGLVYVLYTANQRFVNYVSPNQTAVNSDAEDY) the chain is on the cytoplasmic side.

The protein belongs to the major facilitator superfamily. CAR1 family.

It localises to the cell membrane. Functionally, MFS antiporter that does not display functional linkage as drug transporter and performs functions that significantly affect biofilm development and virulence. No substrate for transport has been identified yet, but plays an important role in the growth in the host. This Candida albicans (strain SC5314 / ATCC MYA-2876) (Yeast) protein is MFS antiporter QDR1 (QDR).